Here is a 101-residue protein sequence, read N- to C-terminus: UPF0213 protein lp_2058 (101 aa).

The region spanning 15 to 92 is the GIY-YIG domain; the sequence is KKYYFYVLLC…KHQSRAAKLK (78 aa).

It belongs to the UPF0213 family.

This Lactiplantibacillus plantarum (strain ATCC BAA-793 / NCIMB 8826 / WCFS1) (Lactobacillus plantarum) protein is UPF0213 protein lp_2058.